A 398-amino-acid chain; its full sequence is Dual-specificity RNA methyltransferase RlmN (398 aa).

Glu-100 serves as the catalytic Proton acceptor. Residues 106-345 (DGDRGTLCVS…TTVRTTRGDD (240 aa)) form the Radical SAM core domain. Cys-113 and Cys-350 are disulfide-bonded. Positions 120, 124, and 127 each coordinate [4Fe-4S] cluster. S-adenosyl-L-methionine contacts are provided by residues 174–175 (GE), Ser-206, 228–230 (SLH), and Asn-307. Cys-350 (S-methylcysteine intermediate) is an active-site residue.

Belongs to the radical SAM superfamily. RlmN family. [4Fe-4S] cluster serves as cofactor.

The protein resides in the cytoplasm. It catalyses the reaction adenosine(2503) in 23S rRNA + 2 reduced [2Fe-2S]-[ferredoxin] + 2 S-adenosyl-L-methionine = 2-methyladenosine(2503) in 23S rRNA + 5'-deoxyadenosine + L-methionine + 2 oxidized [2Fe-2S]-[ferredoxin] + S-adenosyl-L-homocysteine. It carries out the reaction adenosine(37) in tRNA + 2 reduced [2Fe-2S]-[ferredoxin] + 2 S-adenosyl-L-methionine = 2-methyladenosine(37) in tRNA + 5'-deoxyadenosine + L-methionine + 2 oxidized [2Fe-2S]-[ferredoxin] + S-adenosyl-L-homocysteine. Functionally, specifically methylates position 2 of adenine 2503 in 23S rRNA and position 2 of adenine 37 in tRNAs. m2A2503 modification seems to play a crucial role in the proofreading step occurring at the peptidyl transferase center and thus would serve to optimize ribosomal fidelity. The chain is Dual-specificity RNA methyltransferase RlmN from Saccharophagus degradans (strain 2-40 / ATCC 43961 / DSM 17024).